A 205-amino-acid chain; its full sequence is Urease accessory protein UreG (205 aa).

Residue 10–17 coordinates GTP; it reads GPVGAGKT.

The protein belongs to the SIMIBI class G3E GTPase family. UreG subfamily. In terms of assembly, homodimer. UreD, UreF and UreG form a complex that acts as a GTP-hydrolysis-dependent molecular chaperone, activating the urease apoprotein by helping to assemble the nickel containing metallocenter of UreC. The UreE protein probably delivers the nickel.

It is found in the cytoplasm. Facilitates the functional incorporation of the urease nickel metallocenter. This process requires GTP hydrolysis, probably effectuated by UreG. The chain is Urease accessory protein UreG from Corynebacterium glutamicum (strain R).